Reading from the N-terminus, the 370-residue chain is Flagellar P-ring protein 1 (370 aa).

An N-terminal signal peptide occupies residues 1-25 (MSVLIKTRHCFVLLGLWLVLPTASA).

This sequence belongs to the FlgI family. In terms of assembly, the basal body constitutes a major portion of the flagellar organelle and consists of four rings (L,P,S, and M) mounted on a central rod.

The protein localises to the periplasm. It is found in the bacterial flagellum basal body. Its function is as follows. Assembles around the rod to form the L-ring and probably protects the motor/basal body from shearing forces during rotation. The protein is Flagellar P-ring protein 1 of Yersinia pestis.